A 163-amino-acid polypeptide reads, in one-letter code: Dual specificity phosphatase 28 (163 aa).

Residues 10–151 (PFARVAPALF…LQKYEQTLQA (142 aa)) enclose the Tyrosine-protein phosphatase domain. Catalysis depends on Cys-95, which acts as the Phosphocysteine intermediate.

Belongs to the protein-tyrosine phosphatase family. Non-receptor class dual specificity subfamily. In terms of assembly, monomer.

It catalyses the reaction O-phospho-L-tyrosyl-[protein] + H2O = L-tyrosyl-[protein] + phosphate. The catalysed reaction is O-phospho-L-seryl-[protein] + H2O = L-seryl-[protein] + phosphate. The enzyme catalyses O-phospho-L-threonyl-[protein] + H2O = L-threonyl-[protein] + phosphate. In terms of biological role, has phosphatase activity with the synthetic substrate 6,8-difluoro-4-methylumbelliferyl phosphate (in vitro). Has almost no detectable activity with phosphotyrosine, even less activity with phosphothreonine and displays complete lack of activity with phosphoserine. The poor activity with phosphotyrosine may be due to steric hindrance by bulky amino acid sidechains that obstruct access to the active site. This is Dual specificity phosphatase 28 (Dusp28) from Mus musculus (Mouse).